The chain runs to 322 residues: NAD(P)H-dependent D-xylose reductase (322 aa).

Tyr-52 serves as the catalytic Proton donor. His-114 contributes to the substrate binding site. NAD(+)-binding positions include 169-170, 218-227, and 274-284; these read SN, SSFGPQSFVE, and KSNLPERLVQN.

This sequence belongs to the aldo/keto reductase family. In terms of assembly, homodimer.

It carries out the reaction xylitol + NAD(+) = D-xylose + NADH + H(+). The enzyme catalyses xylitol + NADP(+) = D-xylose + NADPH + H(+). Its pathway is carbohydrate metabolism; D-xylose degradation. Its function is as follows. Reduces D-xylose into xylitol. Has a preference for NADPH, but can also utilize NADH as cosubstrate. This is NAD(P)H-dependent D-xylose reductase (XYL1) from Candida tenuis (Yeast).